Here is a 1029-residue protein sequence, read N- to C-terminus: Multidrug resistance protein MdtC (1029 aa).

The next 11 helical transmembrane spans lie at 15–35 (ILLS…LPVA), 333–353 (EVEQ…FLFL), 360–380 (LIPA…MYLC), 387–407 (LSLM…IVAL), 431–451 (VGFT…PLLL), 469–489 (VAIG…CGWL), 528–548 (LVGL…ISIP), 853–873 (VILI…LYES), 897–917 (AFDA…IGIV), 953–973 (PIMM…IASG), and 984–1004 (ITIV…TPVV).

The protein belongs to the resistance-nodulation-cell division (RND) (TC 2.A.6) family. MdtC subfamily. In terms of assembly, part of a tripartite efflux system composed of MdtA, MdtB and MdtC. MdtC forms a heteromultimer with MdtB.

It localises to the cell inner membrane. The polypeptide is Multidrug resistance protein MdtC (Cronobacter sakazakii (strain ATCC BAA-894) (Enterobacter sakazakii)).